The chain runs to 202 residues: Methylthioribulose-1-phosphate dehydratase (202 aa).

His93 and His95 together coordinate Zn(2+).

It belongs to the aldolase class II family. MtnB subfamily. Zn(2+) serves as cofactor.

It catalyses the reaction 5-(methylsulfanyl)-D-ribulose 1-phosphate = 5-methylsulfanyl-2,3-dioxopentyl phosphate + H2O. Its pathway is amino-acid biosynthesis; L-methionine biosynthesis via salvage pathway; L-methionine from S-methyl-5-thio-alpha-D-ribose 1-phosphate: step 2/6. Functionally, catalyzes the dehydration of methylthioribulose-1-phosphate (MTRu-1-P) into 2,3-diketo-5-methylthiopentyl-1-phosphate (DK-MTP-1-P). In Klebsiella pneumoniae subsp. pneumoniae (strain ATCC 700721 / MGH 78578), this protein is Methylthioribulose-1-phosphate dehydratase.